An 860-amino-acid polypeptide reads, in one-letter code: Ubiquitin carboxyl-terminal hydrolase 13 (860 aa).

The segment at 168 to 276 adopts a UBP-type; degenerate zinc-finger fold; sequence QVSRHARSLR…EHLLHFGIDM (109 aa). Positions 192, 195, 212, and 225 each coordinate Zn(2+). In terms of domain architecture, USP spans 318–857; it reads TGIKNLGNSC…LGYMYFYRRL (540 aa). Catalysis depends on Cys-327, which acts as the Nucleophile. The segment at 611–636 is disordered; it reads DLTPPIVIPEDTRDSSTNNSLESPEI. 2 consecutive UBA domains span residues 635–676 and 710–750; these read EIDE…IIAH and QPPE…IFTH. Acidic residues predominate over residues 755–768; the sequence is DESEAMSDTADTEP. The interval 755-795 is disordered; the sequence is DESEAMSDTADTEPNDNSFSNANAHTDSSLSPDQDLSSPRV. Residues 769 to 780 show a composition bias toward polar residues; sequence NDNSFSNANAHT. The span at 781-793 shows a compositional bias: low complexity; that stretch reads DSSLSPDQDLSSP. The Proton acceptor role is filled by His-819.

Belongs to the peptidase C19 family.

It catalyses the reaction Thiol-dependent hydrolysis of ester, thioester, amide, peptide and isopeptide bonds formed by the C-terminal Gly of ubiquitin (a 76-residue protein attached to proteins as an intracellular targeting signal).. Its activity is regulated as follows. Specifically inhibited by spautin-1 (specific and potent autophagy inhibitor-1), a derivative of MBCQ that binds to usp13 and inhibits deubiquitinase activity. Deubiquitinase that mediates deubiquitination of target proteins and is involved in various processes such as autophagy and endoplasmic reticulum-associated degradation (ERAD). The protein is Ubiquitin carboxyl-terminal hydrolase 13 (usp13) of Danio rerio (Zebrafish).